Here is a 300-residue protein sequence, read N- to C-terminus: Tyrosine recombinase XerC (300 aa).

One can recognise a Core-binding (CB) domain in the interval 2 to 88; it reads IQEGKLEQQF…SLRSFYTFLL (87 aa). Positions 109–294 constitute a Tyr recombinase domain; the sequence is RLPKFFYSEE…TKEHLKSTYM (186 aa). Active-site residues include Arg150, Lys174, His246, Arg249, and His272. Tyr281 acts as the O-(3'-phospho-DNA)-tyrosine intermediate in catalysis.

The protein belongs to the 'phage' integrase family. XerC subfamily. As to quaternary structure, forms a cyclic heterotetrameric complex composed of two molecules of XerC and two molecules of XerD.

Its subcellular location is the cytoplasm. In terms of biological role, site-specific tyrosine recombinase, which acts by catalyzing the cutting and rejoining of the recombining DNA molecules. The XerC-XerD complex is essential to convert dimers of the bacterial chromosome into monomers to permit their segregation at cell division. It also contributes to the segregational stability of plasmids. This is Tyrosine recombinase XerC from Listeria monocytogenes serotype 4b (strain F2365).